Here is a 425-residue protein sequence, read N- to C-terminus: Argininosuccinate synthase (425 aa).

Residues 7–15 and Ala33 contribute to the ATP site; that span reads AYSGGLDTS. Residue Tyr84 coordinates L-citrulline. Gly114 contributes to the ATP binding site. L-aspartate-binding residues include Thr116, Asn120, and Asp121. Asn120 lines the L-citrulline pocket. L-citrulline contacts are provided by Arg124, Ser177, Ser186, Glu267, and Tyr279.

The protein belongs to the argininosuccinate synthase family. Type 1 subfamily. Homotetramer.

It localises to the cytoplasm. The enzyme catalyses L-citrulline + L-aspartate + ATP = 2-(N(omega)-L-arginino)succinate + AMP + diphosphate + H(+). It participates in amino-acid biosynthesis; L-arginine biosynthesis; L-arginine from L-ornithine and carbamoyl phosphate: step 2/3. This chain is Argininosuccinate synthase, found in Pseudothermotoga lettingae (strain ATCC BAA-301 / DSM 14385 / NBRC 107922 / TMO) (Thermotoga lettingae).